The chain runs to 372 residues: Putative neuropeptide precursor protein (372 aa).

The signal sequence occupies residues 1-17; sequence MLLFSLTAITAVLAVSA. 2 disordered regions span residues 18–89 and 136–208; these read VPTP…SNGE and VTKS…KRDS. Over residues 19 to 31 the composition is skewed to polar residues; sequence PTPSNNKDGSTIS. Positions 38–57 are enriched in basic and acidic residues; the sequence is DQTKDDNRSLFLNKSDKNDL. The segment covering 72–89 has biased composition (polar residues); the sequence is GYDQTVDQRFDSPQSNGE. A compositionally biased stretch (low complexity) spans 177–191; sequence GGAAASAKTATKNSG.

Post-translationally, may be proteolytically processed to give rise to a number of active peptides. In terms of tissue distribution, detected in the brain and frontal ganglion and in the axons connecting to the corpus cardiacum and corpus allatum (at protein level). Detected in the brain-subesophageal ganglion (brain-SG) complex, fat body, midgut and ovary. Expression in the brain-SG complex is 2-3 times higher than in the other tissues.

The protein resides in the cytoplasm. It localises to the secreted. The chain is Putative neuropeptide precursor protein from Bombyx mori (Silk moth).